The primary structure comprises 183 residues: Ribosome maturation factor RimM (183 aa).

The 76-residue stretch at 96–171 folds into the PRC barrel domain; the sequence is PDEFYDHELE…VALIDPPEGL (76 aa).

This sequence belongs to the RimM family. In terms of assembly, binds ribosomal protein uS19.

It localises to the cytoplasm. In terms of biological role, an accessory protein needed during the final step in the assembly of 30S ribosomal subunit, possibly for assembly of the head region. Essential for efficient processing of 16S rRNA. May be needed both before and after RbfA during the maturation of 16S rRNA. It has affinity for free ribosomal 30S subunits but not for 70S ribosomes. The sequence is that of Ribosome maturation factor RimM from Rhodococcus jostii (strain RHA1).